A 536-amino-acid polypeptide reads, in one-letter code: Protein ST7 homolog (536 aa).

A run of 2 helical transmembrane segments spans residues 3–23 and 49–69; these read CSWTFLWLLWIAMVAVLLFFL and FYVALTGTSSLVSGIILIFEW. Residues 192 to 219 adopt a coiled-coil conformation; sequence AEEDTETVAQAENVLRRALRAIENTLST. Residues 464–484 form a helical membrane-spanning segment; it reads STLGMLIQTFACLAICILAVL.

This sequence belongs to the ST7 family.

Its subcellular location is the membrane. In Caenorhabditis briggsae, this protein is Protein ST7 homolog.